The chain runs to 503 residues: ATP synthase subunit alpha (503 aa).

Position 170–177 (170–177 (GDRQTGKT)) interacts with ATP.

It belongs to the ATPase alpha/beta chains family. As to quaternary structure, F-type ATPases have 2 components, CF(1) - the catalytic core - and CF(0) - the membrane proton channel. CF(1) has five subunits: alpha(3), beta(3), gamma(1), delta(1), epsilon(1). CF(0) has three main subunits: a(1), b(2) and c(9-12). The alpha and beta chains form an alternating ring which encloses part of the gamma chain. CF(1) is attached to CF(0) by a central stalk formed by the gamma and epsilon chains, while a peripheral stalk is formed by the delta and b chains.

Its subcellular location is the cell inner membrane. It catalyses the reaction ATP + H2O + 4 H(+)(in) = ADP + phosphate + 5 H(+)(out). Functionally, produces ATP from ADP in the presence of a proton gradient across the membrane. The alpha chain is a regulatory subunit. The chain is ATP synthase subunit alpha from Geobacter sulfurreducens (strain ATCC 51573 / DSM 12127 / PCA).